Reading from the N-terminus, the 125-residue chain is Fumarate reductase subunit D (125 aa).

The next 3 membrane-spanning stretches (helical) occupy residues 30 to 50 (FAMITPVTVLVLGILVPMGVI), 60 to 80 (VVSFATSIIGALFIIATLALP), and 105 to 125 (IACYAIAGLISALAVVFIFML).

The protein belongs to the FrdD family. In terms of assembly, part of an enzyme complex containing four subunits: a flavoprotein (FrdA), an iron-sulfur protein (FrdB), and two hydrophobic anchor proteins (FrdC and FrdD).

Its subcellular location is the cell inner membrane. Anchors the catalytic components of the fumarate reductase complex to the cell membrane, binds quinones. This chain is Fumarate reductase subunit D, found in Vibrio vulnificus (strain YJ016).